Consider the following 463-residue polypeptide: Glutamyl-tRNA reductase (463 aa).

Substrate contacts are provided by residues 49-52 (TCNR), Ser-109, 114-116 (EQQ), and Gln-120. The active-site Nucleophile is Cys-50. 196-201 (GAGAMS) contacts NADP(+).

The protein belongs to the glutamyl-tRNA reductase family. Homodimer.

The catalysed reaction is (S)-4-amino-5-oxopentanoate + tRNA(Glu) + NADP(+) = L-glutamyl-tRNA(Glu) + NADPH + H(+). The protein operates within porphyrin-containing compound metabolism; protoporphyrin-IX biosynthesis; 5-aminolevulinate from L-glutamyl-tRNA(Glu): step 1/2. Its function is as follows. Catalyzes the NADPH-dependent reduction of glutamyl-tRNA(Glu) to glutamate 1-semialdehyde (GSA). This chain is Glutamyl-tRNA reductase, found in Corynebacterium glutamicum (strain R).